The chain runs to 202 residues: Dephospho-CoA kinase (202 aa).

A DPCK domain is found at 6 to 202; it reads KVSITGDLSS…EYFYALKGAL (197 aa). 14–19 is a binding site for ATP; that stretch reads SSGKTE.

It belongs to the CoaE family.

It localises to the cytoplasm. It catalyses the reaction 3'-dephospho-CoA + ATP = ADP + CoA + H(+). Its pathway is cofactor biosynthesis; coenzyme A biosynthesis; CoA from (R)-pantothenate: step 5/5. Catalyzes the phosphorylation of the 3'-hydroxyl group of dephosphocoenzyme A to form coenzyme A. This Chlamydia abortus (strain DSM 27085 / S26/3) (Chlamydophila abortus) protein is Dephospho-CoA kinase.